Reading from the N-terminus, the 148-residue chain is Antitoxin Xre (148 aa).

Belongs to the MbcA/ParS/Xre antitoxin family. In terms of assembly, homodimer. Forms a complex with cognate toxin Rse.

Antitoxin component of a type II toxin-antitoxin (TA) system. Neutralizes the activity of cognate toxin Res. The sequence is that of Antitoxin Xre from Yersinia enterocolitica serotype O:8 / biotype 1B (strain NCTC 13174 / 8081).